We begin with the raw amino-acid sequence, 624 residues long: (-)-beta-phellandrene synthase 2, chloroplastic (624 aa).

A chloroplast-targeting transit peptide spans 1–47 (MALVSVAPLVSMRRSLFSSPYELKSIDKTIPNLVMCRKRMLGRPSIR). 3 residues coordinate Mg(2+): D375, D379, and D527. Positions 375 to 379 (DDIYD) match the DDXXD motif motif.

Belongs to the terpene synthase family. Tpsd subfamily. The cofactor is Mg(2+). Requires Mn(2+) as cofactor.

It is found in the plastid. The protein resides in the chloroplast. The enzyme catalyses (2E)-geranyl diphosphate = (-)-beta-phellandrene + diphosphate. The protein operates within terpene metabolism; oleoresin biosynthesis. Its pathway is secondary metabolite biosynthesis; terpenoid biosynthesis. Its function is as follows. Monoterpene synthase (TPS) involved in the biosynthesis of monoterpene natural products included in conifer oleoresin secretions and volatile emissions; these compounds contribute to biotic and abiotic stress defense against herbivores and pathogens. Catalyzes the conversion of (2E)-geranyl diphosphate (GPP) to (-)-beta-phellandrene. The chain is (-)-beta-phellandrene synthase 2, chloroplastic from Pinus contorta (Shore pine).